We begin with the raw amino-acid sequence, 202 residues long: Small ribosomal subunit protein uS4c (202 aa).

An S4 RNA-binding domain is found at 90–154 (MRLDNIIFRL…SQSIITKNLN (65 aa)).

Belongs to the universal ribosomal protein uS4 family. In terms of assembly, part of the 30S ribosomal subunit. Contacts protein S5. The interaction surface between S4 and S5 is involved in control of translational fidelity.

It is found in the plastid. It localises to the chloroplast. In terms of biological role, one of the primary rRNA binding proteins, it binds directly to 16S rRNA where it nucleates assembly of the body of the 30S subunit. Functionally, with S5 and S12 plays an important role in translational accuracy. This Ricciocarpos natans (Liverwort) protein is Small ribosomal subunit protein uS4c (rps4).